The sequence spans 96 residues: Secretoglobin family 2B member 2 (96 aa).

The signal sequence occupies residues 1 to 23; it reads MRVTSATCALLLALICSVQLGDA.

It belongs to the secretoglobin family.

The protein resides in the secreted. This is Secretoglobin family 2B member 2 (SCGB2B2) from Homo sapiens (Human).